We begin with the raw amino-acid sequence, 598 residues long: uncharacterized protein (598 aa).

The 284-residue stretch at 39-322 folds into the ABC transmembrane type-1 domain; it reads LIMVFVFVTV…LSNQFNMIQM (284 aa). 5 consecutive transmembrane segments (helical) span residues 40-60, 80-100, 150-170, 177-197, and 273-293; these read IMVF…PYLI, MLIL…QGKI, VLGN…GAVI, VILS…TQIV, and LGFA…IITV. Residues 355 to 589 form the ABC transporter domain; it reads IEFKNVWFSY…RGFYYELFTS (235 aa). 388-395 serves as a coordination point for ATP; it reads GPTGSGKT.

It belongs to the ABC transporter superfamily.

It localises to the cell membrane. This is an uncharacterized protein from Thermotoga maritima (strain ATCC 43589 / DSM 3109 / JCM 10099 / NBRC 100826 / MSB8).